Consider the following 261-residue polypeptide: Glucosamine-6-phosphate deaminase (261 aa).

Asp67 acts as the Proton acceptor; for enolization step in catalysis. Asp136 functions as the For ring-opening step in the catalytic mechanism. His138 (proton acceptor; for ring-opening step) is an active-site residue. Glu143 serves as the catalytic For ring-opening step.

It belongs to the glucosamine/galactosamine-6-phosphate isomerase family. NagB subfamily.

It catalyses the reaction alpha-D-glucosamine 6-phosphate + H2O = beta-D-fructose 6-phosphate + NH4(+). The protein operates within amino-sugar metabolism; N-acetylneuraminate degradation; D-fructose 6-phosphate from N-acetylneuraminate: step 5/5. Catalyzes the reversible isomerization-deamination of glucosamine 6-phosphate (GlcN6P) to form fructose 6-phosphate (Fru6P) and ammonium ion. The sequence is that of Glucosamine-6-phosphate deaminase from Streptomyces coelicolor (strain ATCC BAA-471 / A3(2) / M145).